A 365-amino-acid chain; its full sequence is Putative chalcone synthase (365 aa).

C144 is an active-site residue.

It belongs to the thiolase-like superfamily. Chalcone/stilbene synthases family.

It catalyses the reaction (E)-4-coumaroyl-CoA + 3 malonyl-CoA + 3 H(+) = 2',4,4',6'-tetrahydroxychalcone + 3 CO2 + 4 CoA. The polypeptide is Putative chalcone synthase (bcsA) (Bacillus subtilis (strain 168)).